A 127-amino-acid chain; its full sequence is UPF0102 protein Mmwyl1_2395 (127 aa).

The protein belongs to the UPF0102 family.

In Marinomonas sp. (strain MWYL1), this protein is UPF0102 protein Mmwyl1_2395.